A 557-amino-acid polypeptide reads, in one-letter code: Probable protein kinase UbiB (557 aa).

One can recognise a Protein kinase domain in the interval 121-509 (SFDTVPLASA…RKLQTRVVTA (389 aa)). ATP is bound by residues 127-135 (LASASIAQV) and Lys154. Residue Asp289 is the Proton acceptor of the active site. 2 helical membrane passes run 506 to 526 (VVTAITGSGLLVVAAVLYGLH) and 535 to 555 (VPVWSWISGGAGSAALLVAWL).

This sequence belongs to the ABC1 family. UbiB subfamily.

Its subcellular location is the cell inner membrane. It participates in cofactor biosynthesis; ubiquinone biosynthesis [regulation]. Functionally, is probably a protein kinase regulator of UbiI activity which is involved in aerobic coenzyme Q (ubiquinone) biosynthesis. The polypeptide is Probable protein kinase UbiB (Xanthomonas axonopodis pv. citri (strain 306)).